We begin with the raw amino-acid sequence, 376 residues long: PqqA peptide cyclase (376 aa).

The Radical SAM core domain occupies 7–222 (VGLPLWLLAE…TNEYRDKLKA (216 aa)). Residues cysteine 21, cysteine 25, and cysteine 28 each coordinate [4Fe-4S] cluster.

This sequence belongs to the radical SAM superfamily. PqqE family. In terms of assembly, interacts with PqqD. The interaction is necessary for activity of PqqE. [4Fe-4S] cluster serves as cofactor.

The enzyme catalyses [PQQ precursor protein] + S-adenosyl-L-methionine = E-Y cross-linked-[PQQ precursor protein] + 5'-deoxyadenosine + L-methionine + H(+). Its pathway is cofactor biosynthesis; pyrroloquinoline quinone biosynthesis. Its function is as follows. Catalyzes the cross-linking of a glutamate residue and a tyrosine residue in the PqqA protein as part of the biosynthesis of pyrroloquinoline quinone (PQQ). The polypeptide is PqqA peptide cyclase (Pseudomonas putida (strain ATCC 47054 / DSM 6125 / CFBP 8728 / NCIMB 11950 / KT2440)).